The sequence spans 156 residues: MVHPLIPQLESLARPLAAQLGYQLVQMVFHTNQHPPVLRVDIRPLDPDRETSHADCEAMSQALEVELDRVDLIPGQYVLEVSSPGISNLLTSDRDFVVFKGFAVEVTLDPPYKGKAVWSGHLLGRDEERVALSLKGRRVQLPRASVQRVALSSETD.

Belongs to the RimP family.

It is found in the cytoplasm. In terms of biological role, required for maturation of 30S ribosomal subunits. This Synechococcus sp. (strain JA-2-3B'a(2-13)) (Cyanobacteria bacterium Yellowstone B-Prime) protein is Ribosome maturation factor RimP.